The primary structure comprises 331 residues: DNA-directed RNA polymerase subunit alpha (331 aa).

Positions 1-235 (MTMHIRWRGM…KHLNPFVQYR (235 aa)) are alpha N-terminal domain (alpha-NTD). Residues 255–331 (QLEAKLNMTL…GMRVPNQPLF (77 aa)) form an alpha C-terminal domain (alpha-CTD) region.

It belongs to the RNA polymerase alpha chain family. Homodimer. The RNAP catalytic core consists of 2 alpha, 1 beta, 1 beta' and 1 omega subunit. When a sigma factor is associated with the core the holoenzyme is formed, which can initiate transcription.

It catalyses the reaction RNA(n) + a ribonucleoside 5'-triphosphate = RNA(n+1) + diphosphate. In terms of biological role, DNA-dependent RNA polymerase catalyzes the transcription of DNA into RNA using the four ribonucleoside triphosphates as substrates. This is DNA-directed RNA polymerase subunit alpha from Rhodopirellula baltica (strain DSM 10527 / NCIMB 13988 / SH1).